Consider the following 803-residue polypeptide: Zinc finger protein 226 (803 aa).

In terms of domain architecture, KRAB spans 8-78 (VTFKDVAVAF…TTATRRQGNL (71 aa)). Residues 252-274 (YQCNECKKPFSDLSSFDLHQQLQ) form a C2H2-type 1; degenerate zinc finger. The segment at 280–302 (LTCVERGKGFCYSPVLPVHQKVH) adopts a C2H2-type 2; degenerate zinc-finger fold. 17 consecutive C2H2-type zinc fingers follow at residues 307 to 329 (LKCD…QKVH), 335 to 357 (YKCK…CKVH), 363 to 385 (YNCE…QRLH), 391 to 413 (FKCD…QRVH), 419 to 441 (YKCE…QRVH), 447 to 469 (YKCE…QGVH), 475 to 497 (YICT…QRVH), 503 to 525 (YKCN…LVVH), 531 to 553 (YKCE…QKAH), 559 to 581 (FKCE…QLIH), 587 to 609 (YKCE…CRIH), 615 to 637 (YNCE…QRVH), 643 to 665 (FKCE…QKVH), 671 to 693 (YKCD…QRVH), 699 to 721 (YKCG…QSVH), 727 to 749 (YKCD…QRVH), and 755 to 777 (YKCE…HRIH). Positions 781-803 (KSYKSNRGGKNIRESTQEKKSIK) are disordered. Positions 791 to 803 (NIRESTQEKKSIK) are enriched in basic and acidic residues.

It belongs to the krueppel C2H2-type zinc-finger protein family.

Its subcellular location is the nucleus. May be involved in transcriptional regulation. The sequence is that of Zinc finger protein 226 (ZNF226) from Homo sapiens (Human).